We begin with the raw amino-acid sequence, 204 residues long: Ras-related protein RabQ (204 aa).

12-19 is a GTP binding site; sequence GPPFVGKS. An Effector region motif is present at residues 34 to 42; the sequence is MDTTIGVEF. GTP contacts are provided by residues 60–64 and 118–121; these read DTAGQ and NKCD. 2 S-geranylgeranyl cysteine lipidation sites follow: C202 and C203.

The protein belongs to the small GTPase superfamily. Rab family.

The protein resides in the cell membrane. This is Ras-related protein RabQ (rabQ) from Dictyostelium discoideum (Social amoeba).